Here is a 297-residue protein sequence, read N- to C-terminus: HTH-type transcriptional regulator ArgP (297 aa).

The region spanning 4-60 (PDYRTLQALDAVIRERGFERAAQKLCITQSAVSQRIKQLENMFGQPLLVRTVPPRPT) is the HTH lysR-type domain. Residues 21 to 40 (FERAAQKLCITQSAVSQRIK) constitute a DNA-binding region (H-T-H motif).

It belongs to the LysR transcriptional regulatory family. As to quaternary structure, homodimer.

Functionally, controls the transcription of genes involved in arginine and lysine metabolism. The polypeptide is HTH-type transcriptional regulator ArgP (Escherichia fergusonii (strain ATCC 35469 / DSM 13698 / CCUG 18766 / IAM 14443 / JCM 21226 / LMG 7866 / NBRC 102419 / NCTC 12128 / CDC 0568-73)).